The sequence spans 374 residues: Peptide chain release factor 2 (374 aa).

The residue at position 252 (Gln252) is an N5-methylglutamine.

It belongs to the prokaryotic/mitochondrial release factor family. Post-translationally, methylated by PrmC. Methylation increases the termination efficiency of RF2.

Its subcellular location is the cytoplasm. Peptide chain release factor 2 directs the termination of translation in response to the peptide chain termination codons UGA and UAA. The chain is Peptide chain release factor 2 from Xanthomonas euvesicatoria pv. vesicatoria (strain 85-10) (Xanthomonas campestris pv. vesicatoria).